Consider the following 452-residue polypeptide: Glutamyl-tRNA(Gln) amidotransferase subunit A (452 aa).

Residues lysine 56 and serine 131 each act as charge relay system in the active site. The Acyl-ester intermediate role is filled by serine 155.

Belongs to the amidase family. GatA subfamily. As to quaternary structure, heterotrimer of A, B and C subunits.

The enzyme catalyses L-glutamyl-tRNA(Gln) + L-glutamine + ATP + H2O = L-glutaminyl-tRNA(Gln) + L-glutamate + ADP + phosphate + H(+). Allows the formation of correctly charged Gln-tRNA(Gln) through the transamidation of misacylated Glu-tRNA(Gln) in organisms which lack glutaminyl-tRNA synthetase. The reaction takes place in the presence of glutamine and ATP through an activated gamma-phospho-Glu-tRNA(Gln). This is Glutamyl-tRNA(Gln) amidotransferase subunit A from Campylobacter concisus (strain 13826).